The sequence spans 229 residues: Cytochrome c oxidase subunit 2 (229 aa).

At Met-1–His-26 the chain is on the mitochondrial intermembrane side. A helical transmembrane segment spans residues Ala-27–Asn-48. Residues Ser-49–Glu-62 are Mitochondrial matrix-facing. A helical transmembrane segment spans residues Met-63–Arg-82. Topologically, residues Leu-83–Ser-229 are mitochondrial intermembrane. His-161, Cys-196, Glu-198, Cys-200, His-204, and Met-207 together coordinate Cu cation. Residue Glu-198 participates in Mg(2+) binding.

The protein belongs to the cytochrome c oxidase subunit 2 family. In terms of assembly, component of the cytochrome c oxidase (complex IV, CIV), a multisubunit enzyme composed of a catalytic core of 3 subunits and several supernumerary subunits. The complex exists as a monomer or a dimer and forms supercomplexes (SCs) in the inner mitochondrial membrane with ubiquinol-cytochrome c oxidoreductase (cytochrome b-c1 complex, complex III, CIII). Cu cation serves as cofactor.

The protein resides in the mitochondrion inner membrane. The catalysed reaction is 4 Fe(II)-[cytochrome c] + O2 + 8 H(+)(in) = 4 Fe(III)-[cytochrome c] + 2 H2O + 4 H(+)(out). In terms of biological role, component of the cytochrome c oxidase, the last enzyme in the mitochondrial electron transport chain which drives oxidative phosphorylation. The respiratory chain contains 3 multisubunit complexes succinate dehydrogenase (complex II, CII), ubiquinol-cytochrome c oxidoreductase (cytochrome b-c1 complex, complex III, CIII) and cytochrome c oxidase (complex IV, CIV), that cooperate to transfer electrons derived from NADH and succinate to molecular oxygen, creating an electrochemical gradient over the inner membrane that drives transmembrane transport and the ATP synthase. Cytochrome c oxidase is the component of the respiratory chain that catalyzes the reduction of oxygen to water. Electrons originating from reduced cytochrome c in the intermembrane space (IMS) are transferred via the dinuclear copper A center (CU(A)) of subunit 2 and heme A of subunit 1 to the active site in subunit 1, a binuclear center (BNC) formed by heme A3 and copper B (CU(B)). The BNC reduces molecular oxygen to 2 water molecules using 4 electrons from cytochrome c in the IMS and 4 protons from the mitochondrial matrix. The chain is Cytochrome c oxidase subunit 2 (mt:CoII) from Drosophila affinis (Fruit fly).